We begin with the raw amino-acid sequence, 269 residues long: Surfeit locus protein 4 (269 aa).

A run of 5 helical transmembrane segments spans residues 64–84 (LLASSFVFLNLLGQLTGCVLV), 92–112 (YACFGLFGIIALQTIAYSILW), 179–199 (FFSIVQNIVGTALMILVAIGF), 203–223 (LAALTLVVWLFAINVYFNAFW), and 239–259 (FFQTMSVIGGLLLVVALGPGG). A Di-lysine motif motif is present at residues 266 to 269 (KKEW).

It belongs to the SURF4 family. As to quaternary structure, found in a complex composed at least of SURF4, TMED2 and TMED10. May interact with LMAN1. Interacts with ZFYVE27 and with KIF5A in a ZFYVE27-dependent manner. Interacts with STING1. Interacts with SAR1B. Interacts with TMEM41B.

The protein localises to the endoplasmic reticulum membrane. It is found in the endoplasmic reticulum-Golgi intermediate compartment membrane. The protein resides in the golgi apparatus membrane. Its function is as follows. Endoplasmic reticulum cargo receptor that mediates the export of lipoproteins by recruiting cargos into COPII vesicles to facilitate their secretion. Acts as a cargo receptor for lipoproteins bearing both APOB and APOA1, thereby regulating lipoprotein delivery and the maintenance of lipid homeostasis. Synergizes with the GTPase SAR1B to mediate transport of circulating lipoproteins. Promotes the secretion of PCSK9. Also mediates the efficient secretion of erythropoietin (EPO). May also play a role in the maintenance of the architecture of the endoplasmic reticulum-Golgi intermediate compartment and of the Golgi. The sequence is that of Surfeit locus protein 4 from Homo sapiens (Human).